A 355-amino-acid chain; its full sequence is LIM/homeobox protein lim-4 (355 aa).

2 LIM zinc-binding domains span residues V96–T155 and P166–G228. A DNA-binding region (homeobox) is located at residues T239–H298. Positions R291–T336 are disordered. Residues G306–S326 are compositionally biased toward low complexity.

In terms of assembly, interacts with transcription factor sox-2. In terms of tissue distribution, expressed in the AWB sensory neurons and in one RME motor neuron (RMEV), two RMD motor neurons (RMDL and RMDR), the RID, RIV, SAA and SIA interneurons and the SMB sensory/inter/motor neurons.

The protein localises to the nucleus. Its function is as follows. Transcription factor that binds to the promoter of target genes. Regulates genes involved in serotonin synthesis and release in serotonergic ADF neurons. Involved in specification of neuron cell fate, olfactory receptor expression, locomotion, and foraging behavior. Required in AWB olfactory neurons to repress AWC cell fate and promote the AWB cell fate during early development. Cooperates with additional factors to direct the differentiation of the olfactory neurons, functioning with the transcription factor sox-2 to suppress AWC terminal differentiation and promote AWB neuron differentiation. Involved in regulating terminal specification and maintenance of the SMB sensory/inter/motor neurons. Plays a role in regulation of RID motor neuron differentiation, but is dispensable for motor axon outgrowth in the dorsal nerve cord. May regulate its own expression. This is LIM/homeobox protein lim-4 from Caenorhabditis elegans.